Here is a 295-residue protein sequence, read N- to C-terminus: Ribosomal protein L11 methyltransferase (295 aa).

S-adenosyl-L-methionine contacts are provided by T138, G161, D183, and N230.

It belongs to the methyltransferase superfamily. PrmA family.

It is found in the cytoplasm. It carries out the reaction L-lysyl-[protein] + 3 S-adenosyl-L-methionine = N(6),N(6),N(6)-trimethyl-L-lysyl-[protein] + 3 S-adenosyl-L-homocysteine + 3 H(+). Methylates ribosomal protein L11. The sequence is that of Ribosomal protein L11 methyltransferase from Rhodopseudomonas palustris (strain BisB5).